The following is a 370-amino-acid chain: GTPase Obg (370 aa).

An Obg domain is found at 1 to 159; that stretch reads MKFVDEAYID…KKLKLELRVL (159 aa). Residues 160–333 enclose the OBG-type G domain; it reads ADVGLLGMPN…LVQAIYQHVA (174 aa). GTP-binding positions include 166 to 173, 191 to 195, 213 to 216, 283 to 286, and 314 to 316; these read GMPNAGKS, FTTLH, DVPG, NKLD, and SAL. The Mg(2+) site is built by Ser173 and Thr193. The segment at 346–370 is disordered; it reads FAEPEADESDDEPRFAPQADDPRFR.

This sequence belongs to the TRAFAC class OBG-HflX-like GTPase superfamily. OBG GTPase family. Monomer. Requires Mg(2+) as cofactor.

Its subcellular location is the cytoplasm. An essential GTPase which binds GTP, GDP and possibly (p)ppGpp with moderate affinity, with high nucleotide exchange rates and a fairly low GTP hydrolysis rate. Plays a role in control of the cell cycle, stress response, ribosome biogenesis and in those bacteria that undergo differentiation, in morphogenesis control. This is GTPase Obg from Methylibium petroleiphilum (strain ATCC BAA-1232 / LMG 22953 / PM1).